Consider the following 463-residue polypeptide: GTPase Der (463 aa).

The tract at residues 1-20 (MDEGDEDLISGRGFTEGARK) is disordered. 2 EngA-type G domains span residues 27–190 (GVLA…KQAE) and 202–375 (RRVA…ESWD). GTP is bound by residues 33 to 40 (GRPNVGKS), 80 to 84 (DTGGW), 142 to 145 (NKID), 208 to 215 (GRPNVGKS), 255 to 259 (DTAGI), and 320 to 323 (NKWD). Positions 376–458 (QRIPTGKLNA…PIQISVNIRE (83 aa)) constitute a KH-like domain.

This sequence belongs to the TRAFAC class TrmE-Era-EngA-EngB-Septin-like GTPase superfamily. EngA (Der) GTPase family. As to quaternary structure, associates with the 50S ribosomal subunit.

GTPase that plays an essential role in the late steps of ribosome biogenesis. This Bifidobacterium longum (strain NCC 2705) protein is GTPase Der.